Reading from the N-terminus, the 348-residue chain is Xaa-Pro dipeptidase (348 aa).

5 residues coordinate Co(2+): Asp209, Asp220, His284, Glu313, and Glu327.

Belongs to the peptidase M24B family. Archaeal-type prolidase subfamily. Homodimer. It depends on Co(2+) as a cofactor. The cofactor is Mn(2+).

The protein localises to the cytoplasm. It carries out the reaction Xaa-L-Pro dipeptide + H2O = an L-alpha-amino acid + L-proline. Functionally, splits dipeptides with a prolyl in the C-terminal position and a nonpolar amino acid at the N-terminal position. The protein is Xaa-Pro dipeptidase (pepQ) of Pyrococcus furiosus (strain ATCC 43587 / DSM 3638 / JCM 8422 / Vc1).